The following is a 268-amino-acid chain: 3-deoxy-manno-octulosonate cytidylyltransferase (268 aa).

This sequence belongs to the KdsB family.

Its subcellular location is the cytoplasm. It carries out the reaction 3-deoxy-alpha-D-manno-oct-2-ulosonate + CTP = CMP-3-deoxy-beta-D-manno-octulosonate + diphosphate. The protein operates within nucleotide-sugar biosynthesis; CMP-3-deoxy-D-manno-octulosonate biosynthesis; CMP-3-deoxy-D-manno-octulosonate from 3-deoxy-D-manno-octulosonate and CTP: step 1/1. It functions in the pathway bacterial outer membrane biogenesis; lipopolysaccharide biosynthesis. In terms of biological role, activates KDO (a required 8-carbon sugar) for incorporation into bacterial lipopolysaccharide in Gram-negative bacteria. This chain is 3-deoxy-manno-octulosonate cytidylyltransferase, found in Ralstonia nicotianae (strain ATCC BAA-1114 / GMI1000) (Ralstonia solanacearum).